The following is a 363-amino-acid chain: Suberization-associated anionic peroxidase (363 aa).

The N-terminal stretch at 1-20 (MGFRLSHLSLALSFVALALA) is a signal peptide. The N-linked (GlcNAc...) asparagine glycan is linked to N36. Intrachain disulfides connect C80/C159 and C111/C116. The active-site Proton acceptor is H109. 4 residues coordinate Ca(2+): D110, V113, G115, and D117. N-linked (GlcNAc...) asparagine glycans are attached at residues N126, N161, and N199. Cystine bridges form between C166/C352 and C245/C264. Residue P208 participates in substrate binding. Residues N213 and N225 are each glycosylated (N-linked (GlcNAc...) asparagine). Residue H238 participates in heme b binding. T239 is a Ca(2+) binding site. N-linked (GlcNAc...) asparagine glycosylation occurs at N263. Positions 277, 279, and 284 each coordinate Ca(2+).

Belongs to the peroxidase family. Classical plant (class III) peroxidase subfamily. The cofactor is Ca(2+). Requires heme b as cofactor.

The protein resides in the secreted. The catalysed reaction is 2 a phenolic donor + H2O2 = 2 a phenolic radical donor + 2 H2O. Functionally, removal of H(2)O(2), oxidation of toxic reductants, biosynthesis and degradation of lignin, suberization, auxin catabolism, response to environmental stresses such as wounding, pathogen attack and oxidative stress. These functions might be dependent on each isozyme/isoform in each plant tissue. Its function is as follows. Suggested to catalyze the deposition of the aromatic residues of suberin on the cell wall and thus play a role in cell-suberization. This chain is Suberization-associated anionic peroxidase, found in Solanum tuberosum (Potato).